A 157-amino-acid chain; its full sequence is AM-toxin biosynthesis protein 15 (157 aa).

Residues 17 to 43 (RARHWDSKQGSSNSDVASGGSEVAGNS) are disordered.

It functions in the pathway mycotoxin biosynthesis. Functionally, part of the gene clusters that mediate the biosynthesis of AM-toxins, host-selective toxins (HSTs) causing Alternaria blotch on apple, a worldwide distributed disease. AM-toxins are cyclic depsipeptides containing the 3 residues 2-hydroxy-isovaleric acid (2-HIV), dehydroalanine, L-alanine which are common for all 3 AM-toxins I to III. The fourth precursor is L-alpha-amino-methoxyphenyl-valeric acid (L-Amv) for AM-toxin I, L-alpha-amino-phenyl-valeric acid (L-Apv) for AM-toxin II, and L-alpha-amino-hydroxyphenyl-valeric acid (L-Ahv) for AM-toxin III. AM-toxins have two target sites for affecting susceptible apple cells; they cause invagination of the plasma membrane and electrolyte loss and chloroplast disorganization. The non-ribosomal peptide synthetase AMT1 contains 4 catalytic modules and is responsible for activation of each residue in AM-toxin. The aldo-keto reductase AMT2 catalyzes the conversion of 2-keto-isovaleric acid (2-KIV) to 2-hydroxy-isovaleric acid (2-HIV), one of the precursor residues incorporated by AMT1 during AM-toxin biosynthesis, by reduction of its ketone to an alcohol. The cytochrome P450 monooxygenase AMT3 and the thioesterase AMT4 are also important for AM-toxin production, but their exact function within the AM-toxin biosynthesis are not known yet. Up to 21 proteins (including AMT1 to AMT4) are predicted to be involved in AM-toxin biosynthesis since their expression ishighly up-regulated in AM-toxin-producing cultures. The protein is AM-toxin biosynthesis protein 15 of Alternaria alternata (Alternaria rot fungus).